The chain runs to 517 residues: Benzoate 4-monooxygenase bphA (517 aa).

A helical membrane pass occupies residues 4-24; the sequence is LLLSPYGAYLGLALLVLYYLL. 2 N-linked (GlcNAc...) asparagine glycosylation sites follow: N282 and N325. Residue C461 coordinates heme.

It belongs to the cytochrome P450 family. Requires heme as cofactor.

The protein localises to the membrane. It catalyses the reaction benzoate + reduced [NADPH--hemoprotein reductase] + O2 = 4-hydroxybenzoate + oxidized [NADPH--hemoprotein reductase] + H2O + H(+). In terms of biological role, cytochrome P450 monooxygenase; part of the benzoic acid degradation pathway also known as the protocatechuic acid pathway. Benzoic acid debradation begins with the conversion of benzoic acid into 4-hydroxybenzoic acid through hydroxylation by the benzoate-4-monooxygenase bphA, and its partner NADPH-cytochrome P450 reductase cprA which act as a mediator in electron donation from NADPH. 4-Hydroxybenzoic acid is then converted into 3,4-dihydroxybenzoic acid (also called protocatechuic acid) by the p-hydroxybenzoate-m-hydroxylase phhA. Protocatechuic acid is converted into 3-carboxy-cis,cis-muconic acid by the intradiol ring-cleavage dioxygenase prcA, which is further metabolized through the 3-oxoadipate pathway to finally enter the tricarboxylic acid cycle (TCA). This chain is Benzoate 4-monooxygenase bphA, found in Aspergillus niger (strain ATCC MYA-4892 / CBS 513.88 / FGSC A1513).